Reading from the N-terminus, the 159-residue chain is 2-C-methyl-D-erythritol 2,4-cyclodiphosphate synthase (159 aa).

Positions 10 and 12 each coordinate a divalent metal cation. Residues 10-12 (DVH) and 36-37 (HS) each bind 4-CDP-2-C-methyl-D-erythritol 2-phosphate. His44 serves as a coordination point for a divalent metal cation. 4-CDP-2-C-methyl-D-erythritol 2-phosphate-binding positions include 58 to 60 (DIG), 63 to 67 (FPDTD), 102 to 108 (AQAPKMA), 134 to 137 (TTTE), Phe141, and Arg144.

Belongs to the IspF family. In terms of assembly, homotrimer. Requires a divalent metal cation as cofactor.

It carries out the reaction 4-CDP-2-C-methyl-D-erythritol 2-phosphate = 2-C-methyl-D-erythritol 2,4-cyclic diphosphate + CMP. It participates in isoprenoid biosynthesis; isopentenyl diphosphate biosynthesis via DXP pathway; isopentenyl diphosphate from 1-deoxy-D-xylulose 5-phosphate: step 4/6. Its function is as follows. Involved in the biosynthesis of isopentenyl diphosphate (IPP) and dimethylallyl diphosphate (DMAPP), two major building blocks of isoprenoid compounds. Catalyzes the conversion of 4-diphosphocytidyl-2-C-methyl-D-erythritol 2-phosphate (CDP-ME2P) to 2-C-methyl-D-erythritol 2,4-cyclodiphosphate (ME-CPP) with a corresponding release of cytidine 5-monophosphate (CMP). The polypeptide is 2-C-methyl-D-erythritol 2,4-cyclodiphosphate synthase (Shewanella sp. (strain ANA-3)).